The following is a 459-amino-acid chain: MDTIAAISTPMGEGAIAIVRLSGPEAIQIADKIYKGPKGKTLSSVESHTIHYGHIVDRPSDRVVEEVMVSVLKAPRTFTREDVIEINCHGGIVTVNQVLQLALREGARLAEPGEFTKRAFLNGRIDLSQAEAVMDLIRAKTDRAMNVAMNQMEGRLSALVRRLRSEILETLAHVEVNIDYPEYDDVEEMTHQILVEKATAVKKEIETLLRTSEQGKILREGLSTVIIGRPNVGKSSLLNSLVHEAKAIVTDIPGTTRDVIEEYVNVRGVPLRLVDTAGIRETEDIVERIGVERSRQVLKEADLILLVLNYSEELSEEDVKLFEAVEGMDVIVILNKTDLEPKIDTERVRELANGRPVVTTSLLKEEGINDLEEAIQSLFYTGAIESGDLTYVSNTRHITILQQAKRAIEDALSGIEQDVPIDMVQIDLTRCWELLGEIIGDSVHESLIDQLFSQFCLGK.

Residues Arg20, Glu85, and Arg124 each contribute to the (6S)-5-formyl-5,6,7,8-tetrahydrofolate site. Residues 221-380 (GLSTVIIGRP…LEEAIQSLFY (160 aa)) form the TrmE-type G domain. Asn231 lines the K(+) pocket. GTP contacts are provided by residues 231 to 236 (NVGKSS), 250 to 256 (TDIPGTT), and 275 to 278 (DTAG). Ser235 lines the Mg(2+) pocket. K(+) is bound by residues Thr250, Ile252, and Thr255. A Mg(2+)-binding site is contributed by Thr256. Lys459 contacts (6S)-5-formyl-5,6,7,8-tetrahydrofolate.

It belongs to the TRAFAC class TrmE-Era-EngA-EngB-Septin-like GTPase superfamily. TrmE GTPase family. As to quaternary structure, homodimer. Heterotetramer of two MnmE and two MnmG subunits. K(+) is required as a cofactor.

The protein localises to the cytoplasm. Functionally, exhibits a very high intrinsic GTPase hydrolysis rate. Involved in the addition of a carboxymethylaminomethyl (cmnm) group at the wobble position (U34) of certain tRNAs, forming tRNA-cmnm(5)s(2)U34. The protein is tRNA modification GTPase MnmE of Bacillus subtilis (strain 168).